The following is a 148-amino-acid chain: Calmodulin (148 aa).

N-acetylalanine is present on Ala2. EF-hand domains lie at 8-43 (DQIS…LGQN), 44-79 (PTEA…KMKD), 81-116 (DSEE…LGEK), and 116-148 (KLTD…MMAK). Residues Asp21, Asp23, Asp25, Cys27, Glu32, Asp57, Asp59, Asn61, Thr63, Glu68, Asp94, Asp96, Asn98, and Glu105 each contribute to the Ca(2+) site. Lys116 carries the N6,N6,N6-trimethyllysine modification. Residues Asp129, Asp131, Asp133, Gln135, and Glu140 each contribute to the Ca(2+) site.

Belongs to the calmodulin family.

Functionally, calmodulin mediates the control of a large number of enzymes, ion channels and other proteins by Ca(2+). Among the enzymes to be stimulated by the calmodulin-Ca(2+) complex are a number of protein kinases and phosphatases. This Fagus sylvatica (Beechnut) protein is Calmodulin (CAMF1).